A 145-amino-acid chain; its full sequence is Neuromedin-S (145 aa).

Positions 1–27 (MRSEKHLPPLPLLLAICCLGTLHPSSG) are cleaved as a signal peptide. 2 propeptides span residues 28–89 (FPQS…HEIY) and 92–117 (FLFQ…AEYT). Residue Asn136 is modified to Asparagine amide. Residues 140–145 (VSINEH) constitute a propeptide that is removed on maturation.

Belongs to the NmU family. As to expression, expressed by the skin glands.

The protein localises to the secreted. In terms of biological role, stimulates uterine smooth muscle contraction. Synthetic peptide NmS-17 induces calcium mobilization in CHO cells transfected with either human FM-3/GPR66 (EC(50)=0.085 nM) or FM-4/TGR-1 (EC(50)=0.231 nM) NmU/NmS receptors. In Bombina orientalis (Oriental fire-bellied toad), this protein is Neuromedin-S (nms).